The following is a 436-amino-acid chain: Trigger factor (436 aa).

The PPIase FKBP-type domain occupies 163–248; the sequence is GDRVTVDFEG…VKKIEAANLP (86 aa).

This sequence belongs to the FKBP-type PPIase family. Tig subfamily.

Its subcellular location is the cytoplasm. The catalysed reaction is [protein]-peptidylproline (omega=180) = [protein]-peptidylproline (omega=0). Its function is as follows. Involved in protein export. Acts as a chaperone by maintaining the newly synthesized protein in an open conformation. Functions as a peptidyl-prolyl cis-trans isomerase. This Delftia acidovorans (strain DSM 14801 / SPH-1) protein is Trigger factor.